A 309-amino-acid chain; its full sequence is Putative rhizopine-binding protein (309 aa).

The first 20 residues, 1 to 20, serve as a signal peptide directing secretion; the sequence is MKKFIIGIAAAVLVSTAAHA.

It belongs to the bacterial solute-binding protein 2 family.

It localises to the periplasm. In terms of biological role, involved in rhizopine (L-3-O-methyl-scyllo-inosamine) catabolism. Could be involved in its high affinity transport. In Rhizobium meliloti (Ensifer meliloti), this protein is Putative rhizopine-binding protein (mocB).